Here is a 99-residue protein sequence, read N- to C-terminus: Malonate decarboxylase acyl carrier protein (99 aa).

Ser25 carries the O-(phosphoribosyl dephospho-coenzyme A)serine modification.

Belongs to the MdcC family. Covalently binds the prosthetic group of malonate decarboxylase.

It is found in the cytoplasm. Its function is as follows. Subunit of malonate decarboxylase, it is an acyl carrier protein to which acetyl and malonyl thioester residues are bound via a 2'-(5''-phosphoribosyl)-3'-dephospho-CoA prosthetic group and turn over during the catalytic mechanism. This is Malonate decarboxylase acyl carrier protein from Pseudomonas putida (strain W619).